A 649-amino-acid chain; its full sequence is Leucine-rich repeat transmembrane protein FLRT3 (649 aa).

The signal sequence occupies residues 1-28 (MISPAWSIFLIGTKIGLFLQVAPLSVMA). Positions 29-58 (KSCPSVCRCDAGFIYCNDRFLTSIPTGIPE) constitute an LRRNT domain. Topologically, residues 29–528 (KSCPSVCRCD…KEPYKNPNLP (500 aa)) are extracellular. 2 disulfides stabilise this stretch: C31–C37 and C35–C44. The interval 38-67 (DAGFIYCNDRFLTSIPTGIPEDATTLYLQN) is interaction with ADGRL3. LRR repeat units lie at residues 59 to 80 (DATTLYLQNNQINNAGIPSDLK), 84 to 104 (KVERIYLYHNSLDEFPTNLPK), 105 to 126 (YVKELHLQENNIRTITYDSLSK), 129 to 150 (YLEELRLDDNSVSAVSIEEGAF), 155 to 176 (YLRLLFLSRNHLSTIPWGLPRT), 177 to 197 (IEELRLDDNRIPTISSPSLQG), 200 to 220 (SLKRLVLDGNLLNNHGLGDKV), 226 to 247 (NLTELSLVRNSLTAAPVNLPGT), 248 to 269 (NLRKLYLQDNHINRVPPNAFSY), and 272 to 293 (QLYRLDMSNNNLSNLPQGIFDD). N226 carries an N-linked (GlcNAc...) asparagine glycan. Residues N282 and N296 are each glycosylated (N-linked (GlcNAc...) asparagine). The LRRCT domain occupies 305–357 (NPWYCGCKMKWVRDWLQSLPVKVNVRGLMCQAPEKVRGMAIKDLNAELFDCKD). A disulfide bridge connects residues C309 and C334. A disordered region spans residues 385-407 (VTKQPDIKNPKLTKDHQTTGSPS). The span at 389–401 (PDIKNPKLTKDHQ) shows a compositional bias: basic and acidic residues. Positions 409-504 (KTITITVKSV…VCIETETAPL (96 aa)) constitute a Fibronectin type-III domain. The chain crosses the membrane as a helical span at residues 529–549 (LAAIIGGAVALVTIALLALVC). At 550-649 (WYVHRNGSLF…GIPDSDHSHS (100 aa)) the chain is on the cytoplasmic side. Residues 622 to 649 (LYKNNHSESSSNRSYRDSGIPDSDHSHS) form a disordered region.

Monomer and homodimer. Self-associates (via leucine-rich repeats), giving rise to homooligomers. Interacts with FGFR1. Interacts (via extracellular domain) with ADGRL1/LPHN1 and LPHN2 (via olfactomedin-like domain). Interacts (via extracellular domain) with ADGRL3 (via olfactomedin-like domain); the interaction is direct. Interacts (via extracellular domain) with UNC5B and UNC5D (via extracellular domain); the interaction is direct. Identified in complexes composed of FLRT3, ADGRL3 and UNC5B, respectively FLRT3, ADGRL3 and UNC5D. May also interact (via extracellular domain) with UNC5A and UNC5C. Interacts (via cytoplasmic domain) with ROBO1. In terms of processing, N-glycosylated. Post-translationally, proteolytic cleavage in the juxtamembrane region gives rise to a soluble ectodomain. Cleavage is probably effected by a metalloprotease.

It localises to the cell membrane. Its subcellular location is the presynaptic cell membrane. It is found in the endoplasmic reticulum membrane. The protein resides in the cell junction. The protein localises to the focal adhesion. It localises to the secreted. Its subcellular location is the cell projection. It is found in the axon. The protein resides in the growth cone membrane. Its function is as follows. Functions in cell-cell adhesion, cell migration and axon guidance, exerting an attractive or repulsive role depending on its interaction partners. Plays a role in the spatial organization of brain neurons. Plays a role in vascular development in the retina. Plays a role in cell-cell adhesion via its interaction with ADGRL3 and probably also other latrophilins that are expressed at the surface of adjacent cells. Interaction with the intracellular domain of ROBO1 mediates axon attraction towards cells expressing NTN1. Mediates axon growth cone collapse and plays a repulsive role in neuron guidance via its interaction with UNC5B, and possibly also other UNC-5 family members. Promotes neurite outgrowth (in vitro). Mediates cell-cell contacts that promote an increase both in neurite number and in neurite length. Plays a role in the regulation of the density of glutamaergic synapses. Plays a role in fibroblast growth factor-mediated signaling cascades. Required for normal morphogenesis during embryonic development, but not for normal embryonic patterning. Required for normal ventral closure, headfold fusion and definitive endoderm migration during embryonic development. Required for the formation of a normal basement membrane and the maintenance of a normal anterior visceral endoderm during embryonic development. The polypeptide is Leucine-rich repeat transmembrane protein FLRT3 (FLRT3) (Pongo abelii (Sumatran orangutan)).